The following is a 154-amino-acid chain: Transcriptional repressor NrdR (154 aa).

Residues 3 to 34 fold into a zinc finger; that stretch reads CPFCGANDTKVIDSRLVAEGEQVRRRRECLAC. Residues 49-139 enclose the ATP-cone domain; the sequence is PRLIKTDGSR…VYRRFQDLNE (91 aa).

The protein belongs to the NrdR family. It depends on Zn(2+) as a cofactor.

In terms of biological role, negatively regulates transcription of bacterial ribonucleotide reductase nrd genes and operons by binding to NrdR-boxes. In Pseudomonas fluorescens (strain ATCC BAA-477 / NRRL B-23932 / Pf-5), this protein is Transcriptional repressor NrdR.